The following is a 259-amino-acid chain: Phosphate import ATP-binding protein PstB (259 aa).

One can recognise an ABC transporter domain in the interval 13–254 (IQVRDLNFYY…PAQRQTEDYI (242 aa)). 45–52 (GPSGCGKS) provides a ligand contact to ATP.

Belongs to the ABC transporter superfamily. Phosphate importer (TC 3.A.1.7) family. As to quaternary structure, the complex is composed of two ATP-binding proteins (PstB), two transmembrane proteins (PstC and PstA) and a solute-binding protein (PstS).

The protein localises to the cell inner membrane. It carries out the reaction phosphate(out) + ATP + H2O = ADP + 2 phosphate(in) + H(+). Functionally, part of the ABC transporter complex PstSACB involved in phosphate import. Responsible for energy coupling to the transport system. This Edwardsiella tarda protein is Phosphate import ATP-binding protein PstB.